Here is a 728-residue protein sequence, read N- to C-terminus: Phosphoribosylformylglycinamidine synthase subunit PurL (728 aa).

The active site involves histidine 42. Residues tyrosine 45 and lysine 84 each coordinate ATP. Mg(2+) is bound at residue glutamate 86. Substrate is bound by residues 87–90 (SHNH) and arginine 109. Catalysis depends on histidine 88, which acts as the Proton acceptor. Aspartate 110 is a binding site for Mg(2+). Substrate is bound at residue glutamine 237. Aspartate 265 lines the Mg(2+) pocket. Residue 309–311 (ESQ) participates in substrate binding. Residues aspartate 491 and glycine 528 each coordinate ATP. Asparagine 529 is a Mg(2+) binding site. Serine 531 provides a ligand contact to substrate.

This sequence belongs to the FGAMS family. As to quaternary structure, monomer. Part of the FGAM synthase complex composed of 1 PurL, 1 PurQ and 2 PurS subunits.

It is found in the cytoplasm. It catalyses the reaction N(2)-formyl-N(1)-(5-phospho-beta-D-ribosyl)glycinamide + L-glutamine + ATP + H2O = 2-formamido-N(1)-(5-O-phospho-beta-D-ribosyl)acetamidine + L-glutamate + ADP + phosphate + H(+). Its pathway is purine metabolism; IMP biosynthesis via de novo pathway; 5-amino-1-(5-phospho-D-ribosyl)imidazole from N(2)-formyl-N(1)-(5-phospho-D-ribosyl)glycinamide: step 1/2. Its function is as follows. Part of the phosphoribosylformylglycinamidine synthase complex involved in the purines biosynthetic pathway. Catalyzes the ATP-dependent conversion of formylglycinamide ribonucleotide (FGAR) and glutamine to yield formylglycinamidine ribonucleotide (FGAM) and glutamate. The FGAM synthase complex is composed of three subunits. PurQ produces an ammonia molecule by converting glutamine to glutamate. PurL transfers the ammonia molecule to FGAR to form FGAM in an ATP-dependent manner. PurS interacts with PurQ and PurL and is thought to assist in the transfer of the ammonia molecule from PurQ to PurL. The protein is Phosphoribosylformylglycinamidine synthase subunit PurL of Campylobacter jejuni (strain RM1221).